A 267-amino-acid chain; its full sequence is MTTTDLKPILVFDSGIGGLTVLREARVLMPERHFIYVADDAGFPYGGWEEGALKERVIALFGDLLREHDPEICIIACNTAFTLVGADLRAAYPQMTFVGTVPAIKPAAERTRSGLVSVLATPGTVKRAYTRDLIQSFASQCHVRLVGSENLARMAEAYIRGEKLEDEIVLAEIAPCFVEMDGRKTDIVVLACTHYPFMENVFRRLAPWPVDWLDPAEAIARRARSLVPLPNGFEPLNGEDPAIFTSGKPDFATRRLMQGFGLTVRSA.

Substrate contacts are provided by residues 13–14 (DS) and 45–46 (YG). The active-site Proton donor/acceptor is the cysteine 77. 78-79 (NT) is a substrate binding site. Cysteine 192 functions as the Proton donor/acceptor in the catalytic mechanism. Substrate is bound at residue 193–194 (TH).

The protein belongs to the aspartate/glutamate racemases family.

The catalysed reaction is L-glutamate = D-glutamate. The protein operates within cell wall biogenesis; peptidoglycan biosynthesis. In terms of biological role, provides the (R)-glutamate required for cell wall biosynthesis. The polypeptide is Glutamate racemase (Sinorhizobium fredii (strain NBRC 101917 / NGR234)).